A 349-amino-acid chain; its full sequence is Protein RecA (349 aa).

An ATP-binding site is contributed by 65–72; sequence GPESSGKT.

This sequence belongs to the RecA family.

Its subcellular location is the cytoplasm. Its function is as follows. Can catalyze the hydrolysis of ATP in the presence of single-stranded DNA, the ATP-dependent uptake of single-stranded DNA by duplex DNA, and the ATP-dependent hybridization of homologous single-stranded DNAs. It interacts with LexA causing its activation and leading to its autocatalytic cleavage. This Acinetobacter baumannii (strain AB307-0294) protein is Protein RecA.